The primary structure comprises 856 residues: Dual specificity protein kinase TTK (856 aa).

The residue at position 1 (methionine 1) is an N-acetylmethionine. At serine 7 the chain carries Phosphoserine. Residue threonine 33 is modified to Phosphothreonine. A phosphoserine mark is found at serine 37, serine 80, serine 281, serine 317, and serine 321. Threonine 360 carries the phosphothreonine modification. Serine 363 carries the post-translational modification Phosphoserine. Residues 369–392 (EETKEYQEPEVPESNQKQWQSKRK) are disordered. Serine 393, serine 435, and serine 454 each carry phosphoserine. The Protein kinase domain occupies 524–790 (YSILKQIGSG…IPELLAHPYV (267 aa)). Residues 530-538 (IGSGGSSKV) and lysine 552 each bind ATP. The active-site Proton acceptor is the aspartate 646. Phosphoserine is present on serine 820. Over residues 835–846 (YSGGESHNSSSS) the composition is skewed to low complexity. Positions 835–856 (YSGGESHNSSSSKTFGKKREKK) are disordered.

The protein belongs to the protein kinase superfamily. Ser/Thr protein kinase family. Interacts with TPR; the interactions occurs in a microtubule-independent manner. Interacts with MAD1L1 and MAD2L1.

The enzyme catalyses L-seryl-[protein] + ATP = O-phospho-L-seryl-[protein] + ADP + H(+). It carries out the reaction L-threonyl-[protein] + ATP = O-phospho-L-threonyl-[protein] + ADP + H(+). The catalysed reaction is L-tyrosyl-[protein] + ATP = O-phospho-L-tyrosyl-[protein] + ADP + H(+). Its activity is regulated as follows. Inhibited by the ATP-competitive kinase inhibitor, SP600125. Involved in mitotic spindle assembly checkpoint signaling, a process that delays anaphase until chromosomes are bioriented on the spindle, and in the repair of incorrect mitotic kinetochore-spindle microtubule attachments. Phosphorylates MAD1L1 to promote the mitotic spindle assembly checkpoint. Phosphorylates CDCA8/Borealin leading to enhanced AURKB activity at the kinetochore. Phosphorylates SKA3 at 'Ser-34' leading to dissociation of the SKA complex from microtubules and destabilization of microtubule-kinetochore attachments. Phosphorylates KNL1, KNTC1 and autophosphorylates. Phosphorylates MCRS1 which enhances recruitment of KIF2A to the minus end of spindle microtubules and promotes chromosome alignment. The sequence is that of Dual specificity protein kinase TTK (TTK) from Macaca fascicularis (Crab-eating macaque).